Here is a 207-residue protein sequence, read N- to C-terminus: Large ribosomal subunit protein bL25 (207 aa).

This sequence belongs to the bacterial ribosomal protein bL25 family. CTC subfamily. As to quaternary structure, part of the 50S ribosomal subunit; part of the 5S rRNA/L5/L18/L25 subcomplex. Contacts the 5S rRNA. Binds to the 5S rRNA independently of L5 and L18.

In terms of biological role, this is one of the proteins that binds to the 5S RNA in the ribosome where it forms part of the central protuberance. The sequence is that of Large ribosomal subunit protein bL25 from Paraburkholderia xenovorans (strain LB400).